A 181-amino-acid chain; its full sequence is Oligoribonuclease (181 aa).

The Exonuclease domain occupies L8–L171. Y129 is a catalytic residue.

This sequence belongs to the oligoribonuclease family.

The protein resides in the cytoplasm. 3'-to-5' exoribonuclease specific for small oligoribonucleotides. The sequence is that of Oligoribonuclease from Serratia proteamaculans (strain 568).